The chain runs to 101 residues: NAD(P)H-quinone oxidoreductase subunit 4L, chloroplastic (101 aa).

3 consecutive transmembrane segments (helical) span residues 2–22 (ILEH…YGLI), 30–52 (ALMC…SDFF), and 61–81 (IFSI…LAIV).

It belongs to the complex I subunit 4L family. As to quaternary structure, NDH is composed of at least 16 different subunits, 5 of which are encoded in the nucleus.

The protein resides in the plastid. It localises to the chloroplast thylakoid membrane. It carries out the reaction a plastoquinone + NADH + (n+1) H(+)(in) = a plastoquinol + NAD(+) + n H(+)(out). The catalysed reaction is a plastoquinone + NADPH + (n+1) H(+)(in) = a plastoquinol + NADP(+) + n H(+)(out). Its function is as follows. NDH shuttles electrons from NAD(P)H:plastoquinone, via FMN and iron-sulfur (Fe-S) centers, to quinones in the photosynthetic chain and possibly in a chloroplast respiratory chain. The immediate electron acceptor for the enzyme in this species is believed to be plastoquinone. Couples the redox reaction to proton translocation, and thus conserves the redox energy in a proton gradient. This chain is NAD(P)H-quinone oxidoreductase subunit 4L, chloroplastic, found in Oenothera glazioviana (Large-flowered evening primrose).